The chain runs to 338 residues: Ketol-acid reductoisomerase (NADP(+)) (338 aa).

One can recognise a KARI N-terminal Rossmann domain in the interval 1 to 181 (MQVYYDKDCD…GGGRTGIIET (181 aa)). NADP(+) contacts are provided by residues 24-27 (FGSQ), Arg-47, Ser-50, Ser-52, and 82-85 (DEFQ). His-107 is a catalytic residue. Gly-133 is a binding site for NADP(+). The region spanning 182–327 (TFRDECETDL…RKLRAMMPWI (146 aa)) is the KARI C-terminal knotted domain. Residues Asp-190, Glu-194, Glu-226, and Glu-230 each contribute to the Mg(2+) site. Ser-251 provides a ligand contact to substrate.

Belongs to the ketol-acid reductoisomerase family. Mg(2+) serves as cofactor.

It catalyses the reaction (2R)-2,3-dihydroxy-3-methylbutanoate + NADP(+) = (2S)-2-acetolactate + NADPH + H(+). The enzyme catalyses (2R,3R)-2,3-dihydroxy-3-methylpentanoate + NADP(+) = (S)-2-ethyl-2-hydroxy-3-oxobutanoate + NADPH + H(+). It participates in amino-acid biosynthesis; L-isoleucine biosynthesis; L-isoleucine from 2-oxobutanoate: step 2/4. The protein operates within amino-acid biosynthesis; L-valine biosynthesis; L-valine from pyruvate: step 2/4. Its function is as follows. Involved in the biosynthesis of branched-chain amino acids (BCAA). Catalyzes an alkyl-migration followed by a ketol-acid reduction of (S)-2-acetolactate (S2AL) to yield (R)-2,3-dihydroxy-isovalerate. In the isomerase reaction, S2AL is rearranged via a Mg-dependent methyl migration to produce 3-hydroxy-3-methyl-2-ketobutyrate (HMKB). In the reductase reaction, this 2-ketoacid undergoes a metal-dependent reduction by NADPH to yield (R)-2,3-dihydroxy-isovalerate. The sequence is that of Ketol-acid reductoisomerase (NADP(+)) from Hydrogenovibrio crunogenus (strain DSM 25203 / XCL-2) (Thiomicrospira crunogena).